We begin with the raw amino-acid sequence, 350 residues long: Protein RecA (350 aa).

66 to 73 serves as a coordination point for ATP; that stretch reads GPESSGKT.

This sequence belongs to the RecA family.

Its subcellular location is the cytoplasm. Can catalyze the hydrolysis of ATP in the presence of single-stranded DNA, the ATP-dependent uptake of single-stranded DNA by duplex DNA, and the ATP-dependent hybridization of homologous single-stranded DNAs. It interacts with LexA causing its activation and leading to its autocatalytic cleavage. The chain is Protein RecA from Dichelobacter nodosus (strain VCS1703A).